Reading from the N-terminus, the 275-residue chain is Large ribosomal subunit protein uL2 (275 aa).

Disordered regions lie at residues K28–R48 and V223–K275.

Belongs to the universal ribosomal protein uL2 family. As to quaternary structure, part of the 50S ribosomal subunit. Forms a bridge to the 30S subunit in the 70S ribosome.

One of the primary rRNA binding proteins. Required for association of the 30S and 50S subunits to form the 70S ribosome, for tRNA binding and peptide bond formation. It has been suggested to have peptidyltransferase activity; this is somewhat controversial. Makes several contacts with the 16S rRNA in the 70S ribosome. The protein is Large ribosomal subunit protein uL2 of Photobacterium profundum (strain SS9).